The following is a 362-amino-acid chain: 4-hydroxythreonine-4-phosphate dehydrogenase (362 aa).

Residue Thr149 coordinates substrate. Residues His184, His229, and His295 each contribute to the a divalent metal cation site. Substrate contacts are provided by Lys303, Asn312, and Arg321.

It belongs to the PdxA family. As to quaternary structure, homodimer. A divalent metal cation is required as a cofactor.

The protein localises to the cytoplasm. The enzyme catalyses 4-(phosphooxy)-L-threonine + NAD(+) = 3-amino-2-oxopropyl phosphate + CO2 + NADH. It functions in the pathway cofactor biosynthesis; pyridoxine 5'-phosphate biosynthesis; pyridoxine 5'-phosphate from D-erythrose 4-phosphate: step 4/5. Catalyzes the NAD(P)-dependent oxidation of 4-(phosphooxy)-L-threonine (HTP) into 2-amino-3-oxo-4-(phosphooxy)butyric acid which spontaneously decarboxylates to form 3-amino-2-oxopropyl phosphate (AHAP). This Nostoc sp. (strain PCC 7120 / SAG 25.82 / UTEX 2576) protein is 4-hydroxythreonine-4-phosphate dehydrogenase.